Here is a 293-residue protein sequence, read N- to C-terminus: Deubiquitinase OTUD6B (293 aa).

2 disordered regions span residues 1-43 (MEEV…RRKQ) and 57-114 (QKHE…LEKE). An OTU domain is found at 147 to 284 (LQIKEISSDG…GEHYNSVEPL (138 aa)). The tract at residues 152–158 (ISSDGHC) is cys-loop. The active site involves Asp-155. Cys-158 acts as the Nucleophile in catalysis. The variable-loop stretch occupies residues 219–229 (VADTAAWGGQL). Residues 267-277 (YMRHAYGLGEH) form a his-loop region. His-277 is an active-site residue.

The catalysed reaction is Thiol-dependent hydrolysis of ester, thioester, amide, peptide and isopeptide bonds formed by the C-terminal Gly of ubiquitin (a 76-residue protein attached to proteins as an intracellular targeting signal).. Functionally, deubiquitinating enzyme that may play a role in the ubiquitin-dependent regulation of different cellular processes. In Danio rerio (Zebrafish), this protein is Deubiquitinase OTUD6B (otud6b).